The following is a 239-amino-acid chain: Putative transcriptional regulator of 2-aminoethylphosphonate degradation operons (239 aa).

One can recognise an HTH gntR-type domain in the interval 8–76 (IPQYLLIKAQ…DRRGWFVTPE (69 aa)). Residues 36-55 (ERELCAIFNTTRITIRESLA) constitute a DNA-binding region (H-T-H motif).

This Salmonella typhi protein is Putative transcriptional regulator of 2-aminoethylphosphonate degradation operons (phnR).